Here is an 819-residue protein sequence, read N- to C-terminus: DNA topoisomerase 4 subunit A (819 aa).

The region spanning 30 to 496 is the Topo IIA-type catalytic domain; that stretch reads LPDIRDGLKP…QIIEIDTASL (467 aa). Residue tyrosine 118 is the O-(5'-phospho-DNA)-tyrosine intermediate of the active site.

It belongs to the type II topoisomerase GyrA/ParC subunit family. ParC type 2 subfamily. As to quaternary structure, heterotetramer composed of ParC and ParE.

Its subcellular location is the cell membrane. It carries out the reaction ATP-dependent breakage, passage and rejoining of double-stranded DNA.. Functionally, topoisomerase IV is essential for chromosome segregation. It relaxes supercoiled DNA. Performs the decatenation events required during the replication of a circular DNA molecule. This chain is DNA topoisomerase 4 subunit A, found in Streptococcus pyogenes serotype M1.